We begin with the raw amino-acid sequence, 238 residues long: Putative ABC transporter ATP-binding protein AF_1841 (238 aa).

The ABC transporter domain maps to 8-238 (IEADSVSYDY…EELLEKAGVI (231 aa)). ATP is bound at residue 41–48 (GANGSGKS).

It belongs to the ABC transporter superfamily.

The protein localises to the cell membrane. Its function is as follows. Probably part of an ABC transporter complex. Responsible for energy coupling to the transport system. The sequence is that of Putative ABC transporter ATP-binding protein AF_1841 from Archaeoglobus fulgidus (strain ATCC 49558 / DSM 4304 / JCM 9628 / NBRC 100126 / VC-16).